Here is a 487-residue protein sequence, read N- to C-terminus: GTPase Der (487 aa).

2 consecutive EngA-type G domains span residues 3–166 (PVIA…PRDA) and 193–366 (IKIA…KSAV). Residues 9 to 16 (GRPNVGKS), 56 to 60 (DTGGI), 118 to 121 (NKID), 199 to 206 (GRPNVGKS), 246 to 250 (DTAGV), and 311 to 314 (NKWD) each bind GTP. In terms of domain architecture, KH-like spans 367–451 (TRWPTSRLTQ…PIRIEYKGGE (85 aa)). Residues 449–461 (GGENPFEGKKNTL) show a composition bias toward basic and acidic residues. Residues 449 to 487 (GGENPFEGKKNTLTDRQVNKKRRLMSHHKKAEKKRRDKR) form a disordered region. A compositionally biased stretch (basic residues) spans 467-487 (NKKRRLMSHHKKAEKKRRDKR).

This sequence belongs to the TRAFAC class TrmE-Era-EngA-EngB-Septin-like GTPase superfamily. EngA (Der) GTPase family. Associates with the 50S ribosomal subunit.

Its function is as follows. GTPase that plays an essential role in the late steps of ribosome biogenesis. This Pseudomonas putida (strain GB-1) protein is GTPase Der.